The sequence spans 426 residues: Glutamate-1-semialdehyde 2,1-aminomutase (426 aa).

N6-(pyridoxal phosphate)lysine is present on lysine 265.

Belongs to the class-III pyridoxal-phosphate-dependent aminotransferase family. HemL subfamily. In terms of assembly, homodimer. Requires pyridoxal 5'-phosphate as cofactor.

Its subcellular location is the cytoplasm. The catalysed reaction is (S)-4-amino-5-oxopentanoate = 5-aminolevulinate. It participates in porphyrin-containing compound metabolism; protoporphyrin-IX biosynthesis; 5-aminolevulinate from L-glutamyl-tRNA(Glu): step 2/2. The chain is Glutamate-1-semialdehyde 2,1-aminomutase from Shigella sonnei (strain Ss046).